A 207-amino-acid chain; its full sequence is 3-hexulose-6-phosphate synthase (207 aa).

The protein belongs to the HPS/KGPDC family. HPS subfamily.

The catalysed reaction is D-ribulose 5-phosphate + formaldehyde = D-arabino-hex-3-ulose 6-phosphate. The protein operates within one-carbon metabolism; formaldehyde assimilation via RuMP pathway; D-fructose 6-phosphate from D-ribulose 5-phosphate and formaldehyde: step 1/2. Catalyzes the condensation of ribulose 5-phosphate with formaldehyde to form 3-hexulose 6-phosphate. The chain is 3-hexulose-6-phosphate synthase (rmpA) from Mycobacterium gastri.